A 207-amino-acid chain; its full sequence is Ribosomal RNA large subunit methyltransferase E (207 aa).

S-adenosyl-L-methionine is bound by residues Gly56, Trp58, Asp76, Asp94, and Asp116. The active-site Proton acceptor is the Lys156.

Belongs to the class I-like SAM-binding methyltransferase superfamily. RNA methyltransferase RlmE family.

It localises to the cytoplasm. It carries out the reaction uridine(2552) in 23S rRNA + S-adenosyl-L-methionine = 2'-O-methyluridine(2552) in 23S rRNA + S-adenosyl-L-homocysteine + H(+). In terms of biological role, specifically methylates the uridine in position 2552 of 23S rRNA at the 2'-O position of the ribose in the fully assembled 50S ribosomal subunit. This is Ribosomal RNA large subunit methyltransferase E from Desulfatibacillum aliphaticivorans.